Consider the following 306-residue polypeptide: 4-diphosphocytidyl-2-C-methyl-D-erythritol kinase (306 aa).

The active site involves Lys-11. ATP is bound at residue 98–108 (PIAGGMGGGSA). Asp-140 is a catalytic residue.

It belongs to the GHMP kinase family. IspE subfamily.

It carries out the reaction 4-CDP-2-C-methyl-D-erythritol + ATP = 4-CDP-2-C-methyl-D-erythritol 2-phosphate + ADP + H(+). It participates in isoprenoid biosynthesis; isopentenyl diphosphate biosynthesis via DXP pathway; isopentenyl diphosphate from 1-deoxy-D-xylulose 5-phosphate: step 3/6. Catalyzes the phosphorylation of the position 2 hydroxy group of 4-diphosphocytidyl-2C-methyl-D-erythritol. This chain is 4-diphosphocytidyl-2-C-methyl-D-erythritol kinase, found in Leifsonia xyli subsp. xyli (strain CTCB07).